The primary structure comprises 138 residues: MVAPAARVFLRAVRAALTSTVPDLLCLLARGSPRGLASGRLPLAVHSAQHGPGSGAPWLRIARRALRFVLSKHWGDDCYLTNRLWQDLKPPSHVENGQELRLAPPVQWALQVQGNQLQTAVLCLRMAPPEPAGSRQRI.

Positions 1-35 are cleaved as a signal peptide; sequence MVAPAARVFLRAVRAALTSTVPDLLCLLARGSPRG.

As to expression, isoform 1 is highly expressed in small intestine, testis and kidney, medium expressed in brain and heart and low expressed in colon; it could not be detected in liver, adrenal gland and pancreas.

It localises to the secreted. This is an uncharacterized protein from Homo sapiens (Human).